The primary structure comprises 302 residues: RNA polymerase II holoenzyme cyclin-like subunit (302 aa).

In terms of domain architecture, Cyclin N-terminal spans 53 to 142 (QQLIKLGKRM…LGECEFSLIS (90 aa)).

It belongs to the cyclin family. Cyclin C subfamily. In terms of assembly, component of the srb8-11 complex, a regulatory module of the Mediator complex.

It is found in the nucleus. Functionally, component of the srb8-11 complex. The srb8-11 complex is a regulatory module of the Mediator complex which is itself involved in regulation of basal and activated RNA polymerase II-dependent transcription. The srb8-11 complex may be involved in the transcriptional repression of a subset of genes regulated by Mediator. It may inhibit the association of the Mediator complex with RNA polymerase II to form the holoenzyme complex. The srb8-11 complex phosphorylates the C-terminal domain (CTD) of the largest subunit of RNA polymerase II. The chain is RNA polymerase II holoenzyme cyclin-like subunit (ssn8) from Aspergillus fumigatus (strain ATCC MYA-4609 / CBS 101355 / FGSC A1100 / Af293) (Neosartorya fumigata).